The chain runs to 345 residues: Phosphoribosylformylglycinamidine cyclo-ligase (345 aa).

This sequence belongs to the AIR synthase family.

The protein localises to the cytoplasm. It catalyses the reaction 2-formamido-N(1)-(5-O-phospho-beta-D-ribosyl)acetamidine + ATP = 5-amino-1-(5-phospho-beta-D-ribosyl)imidazole + ADP + phosphate + H(+). It participates in purine metabolism; IMP biosynthesis via de novo pathway; 5-amino-1-(5-phospho-D-ribosyl)imidazole from N(2)-formyl-N(1)-(5-phospho-D-ribosyl)glycinamide: step 2/2. The polypeptide is Phosphoribosylformylglycinamidine cyclo-ligase (Mannheimia succiniciproducens (strain KCTC 0769BP / MBEL55E)).